The chain runs to 362 residues: Flagellar P-ring protein (362 aa).

The N-terminal stretch at 1-18 (MKHIALIVLYFLSFSVQA) is a signal peptide.

Belongs to the FlgI family. The basal body constitutes a major portion of the flagellar organelle and consists of four rings (L,P,S, and M) mounted on a central rod.

Its subcellular location is the periplasm. It is found in the bacterial flagellum basal body. In terms of biological role, assembles around the rod to form the L-ring and probably protects the motor/basal body from shearing forces during rotation. This Marinomonas sp. (strain MWYL1) protein is Flagellar P-ring protein.